Consider the following 116-residue polypeptide: Large ribosomal subunit protein bL19 (116 aa).

It belongs to the bacterial ribosomal protein bL19 family.

In terms of biological role, this protein is located at the 30S-50S ribosomal subunit interface and may play a role in the structure and function of the aminoacyl-tRNA binding site. The polypeptide is Large ribosomal subunit protein bL19 (Chloroflexus aurantiacus (strain ATCC 29366 / DSM 635 / J-10-fl)).